A 393-amino-acid chain; its full sequence is NAD(P)H-quinone oxidoreductase subunit H 1 (393 aa).

It belongs to the complex I 49 kDa subunit family. In terms of assembly, NDH-1 can be composed of about 15 different subunits; different subcomplexes with different compositions have been identified which probably have different functions.

It is found in the cell inner membrane. It catalyses the reaction a plastoquinone + NADH + (n+1) H(+)(in) = a plastoquinol + NAD(+) + n H(+)(out). The catalysed reaction is a plastoquinone + NADPH + (n+1) H(+)(in) = a plastoquinol + NADP(+) + n H(+)(out). Its function is as follows. NDH-1 shuttles electrons from an unknown electron donor, via FMN and iron-sulfur (Fe-S) centers, to quinones in the respiratory and/or the photosynthetic chain. The immediate electron acceptor for the enzyme in this species is believed to be plastoquinone. Couples the redox reaction to proton translocation, and thus conserves the redox energy in a proton gradient. Cyanobacterial NDH-1 also plays a role in inorganic carbon-concentration. This is NAD(P)H-quinone oxidoreductase subunit H 1 from Gloeobacter violaceus (strain ATCC 29082 / PCC 7421).